The chain runs to 345 residues: Skn-1 dependent zygotic transcript 15 protein (345 aa).

An F-box domain is found at 11-55; sequence AFGLHKLPHLVSDKVVKSMVPMELFTYSMVAEETKALVKRLFKKV.

Functionally, may have a role in embryogenesis. The polypeptide is Skn-1 dependent zygotic transcript 15 protein (sdz-15) (Caenorhabditis elegans).